The following is a 978-amino-acid chain: Chaperone protein ClpB2, chloroplastic (978 aa).

A chloroplast-targeting transit peptide spans 1-76 (MAAAPPLAAG…RMPPRTLSVR (76 aa)). The Clp R domain occupies 85-229 (TQQEFTEMAW…KTAIESIRGK (145 aa)). Repeat stretches follow at residues 89-154 (FTEM…IQRQ) and 166-229 (LGRD…IRGK). The interval 244 to 492 (LDKYGKDLTA…KLKMEITSKP (249 aa)) is i. ATP-binding positions include 289–296 (GEPGVGKT) and 692–699 (GPTGVGKT). The tract at residues 618–809 (VTQDDIAEIV…IIIMTSNVGS (192 aa)) is II.

The protein belongs to the ClpA/ClpB family.

Its subcellular location is the plastid. It is found in the chloroplast. Its function is as follows. Molecular chaperone that may play a role in chloroplast development. The sequence is that of Chaperone protein ClpB2, chloroplastic (CLPB2) from Oryza sativa subsp. japonica (Rice).